The sequence spans 620 residues: Protein CNGC15b (620 aa).

6 consecutive transmembrane segments (helical) span residues 73 to 93 (IFLVACLISLFVDPLFFYLPI), 102 to 122 (IGIAVEVFLIIIRSIADVFYV), 161 to 181 (GFFLDFIAALPLPQVLIWIVI), 198 to 218 (FIIIIQYLPRLFLIFPLSSQI), 237 to 257 (LMLYMLASHVLGACWYLLSIE), and 356 to 376 (GEIMFAIVIATLGLVLFALLI). 462-559 (LFDAMDERML…SSTRTVKAIS (98 aa)) serves as a coordination point for a nucleoside 3',5'-cyclic phosphate.

The protein belongs to the cyclic nucleotide-gated cation channel (TC 1.A.1.5) family. In terms of assembly, interacts (via N-terminus) with DMI1 (via c-terminus). The Nod factor has no effect on this interaction, implying that the complex is maintained after activation. Expressed in roots, stems, leaves, flowers and pods.

It localises to the nucleus membrane. Its function is as follows. Cyclic nucleotide-gated channel involved in the establishment of both rhizobial and mycorrhizal associations. Required for full activation of nuclear-localized Ca(2+) oscillations by Nod and Myc factors. Simultaneous activation of the K(+)-permeable channel DMI1 and the Ca(2+) channel CNGC15 can give rise to sustained Ca(2+) oscillations. May function during fertilization in both female and male gametophytic Ca(2+) signaling. The protein is Protein CNGC15b of Medicago truncatula (Barrel medic).